The primary structure comprises 640 residues: Probable potassium transport system protein Kup 1 (640 aa).

Transmembrane regions (helical) follow at residues Leu25–Leu45, Val65–Leu85, Ala115–Ile135, Pro153–Ile173, Val181–Leu201, Gly227–Leu247, Trp263–Leu283, Met305–Phe325, Ile353–Phe373, Ala381–Leu401, Trp410–Ala430, and Gly438–Gly458.

This sequence belongs to the HAK/KUP transporter (TC 2.A.72) family.

It localises to the cell inner membrane. The enzyme catalyses K(+)(in) + H(+)(in) = K(+)(out) + H(+)(out). Functionally, transport of potassium into the cell. Likely operates as a K(+):H(+) symporter. This Chromobacterium violaceum (strain ATCC 12472 / DSM 30191 / JCM 1249 / CCUG 213 / NBRC 12614 / NCIMB 9131 / NCTC 9757 / MK) protein is Probable potassium transport system protein Kup 1.